Consider the following 378-residue polypeptide: Ribosomal RNA large subunit methyltransferase G (378 aa).

It belongs to the methyltransferase superfamily. RlmG family.

Its subcellular location is the cytoplasm. It catalyses the reaction guanosine(1835) in 23S rRNA + S-adenosyl-L-methionine = N(2)-methylguanosine(1835) in 23S rRNA + S-adenosyl-L-homocysteine + H(+). Specifically methylates the guanine in position 1835 (m2G1835) of 23S rRNA. This Shewanella putrefaciens (strain CN-32 / ATCC BAA-453) protein is Ribosomal RNA large subunit methyltransferase G.